Reading from the N-terminus, the 271-residue chain is ATP synthase subunit a (271 aa).

The next 5 helical transmembrane spans lie at 47 to 67 (WENI…AYLG), 107 to 127 (FLGT…VPLM), 133 to 153 (SLNI…FLNI), 209 to 229 (ILIG…ETFV), and 235 to 255 (LPFM…FTLL).

This sequence belongs to the ATPase A chain family. As to quaternary structure, F-type ATPases have 2 components, CF(1) - the catalytic core - and CF(0) - the membrane proton channel. CF(1) has five subunits: alpha(3), beta(3), gamma(1), delta(1), epsilon(1). CF(0) has three main subunits: a(1), b(2) and c(9-12). The alpha and beta chains form an alternating ring which encloses part of the gamma chain. CF(1) is attached to CF(0) by a central stalk formed by the gamma and epsilon chains, while a peripheral stalk is formed by the delta and b chains.

It is found in the cell inner membrane. Key component of the proton channel; it plays a direct role in the translocation of protons across the membrane. The chain is ATP synthase subunit a from Protochlamydia amoebophila (strain UWE25).